A 577-amino-acid chain; its full sequence is Insulin-like growth factor 2 mRNA-binding protein 1 (577 aa).

RRM domains lie at 2–75 (NKLY…HSVP) and 81–156 (RKIQ…YIPD). Phosphoserine is present on residues serine 12 and serine 73. Residues 156–190 (DEQITQGPENGRRGGFGSRGQPRQGSPVAAGAPAK) are disordered. Serine 181 is subject to Phosphoserine; by MTOR. KH domains lie at 195–260 (DIPL…CKMI), 276–343 (EVPL…EQEI), 405–470 (QEMV…QGRI), and 487–553 (KLET…QRKI). The tract at residues 312-323 (ISSLQDLTLYNP) is sufficient for nuclear export. Residues 485-495 (EVKLETHIRVP) are sufficient for nuclear export. Phosphothreonine is present on threonine 528.

This sequence belongs to the RRM IMP/VICKZ family. In terms of assembly, can form homodimers and heterodimers with IGF2BP1 and IGF2BP3. Component of the coding region determinant (CRD)-mediated complex, composed of DHX9, HNRNPU, IGF2BP1, SYNCRIP and YBX1. Identified in a mRNP complex, at least composed of DHX9, DDX3X, ELAVL1, HNRNPU, IGF2BP1, ILF3, PABPC1, PCBP2, PTBP2, STAU1, STAU2, SYNCRIP and YBX1. Associates with mRNP complex. Interacts with FMR1. Component of a multisubunit autoregulatory RNP complex (ARC), at least composed of IGF2BP1, PABPC1 and CSDE1. Interacts with AGO1 and AGO2. Interacts, through domains KH3 and KH4, with PABPC1 in an RNA-independent manner. Component of a TAU mRNP complex, at least composed of IGF2BP1, ELAVL4 and G3BP. Interacts with ELAVL4 in an RNA-dependent manner. Associates with microtubules and polysomes. Interacts with ELAVL1 and MATR3. Phosphorylated at Ser-181 by mTORC2 cotranslationally, promoting binding to the 3'-UTR of IGF2 mRNA. In terms of tissue distribution, expressed in zygotes and blastocysts (at protein level). Expressed in brain, skeletal muscle, trophoblasts of placenta, oocytes and spermatogonia (at protein level). Expressed in testis and ovary. Following colon injury, expressed in the wound bed mesenchyme during the first phase of repair, probably by colonic mesenchymal stem cells (at protein level).

It localises to the nucleus. Its subcellular location is the cytoplasm. The protein resides in the perinuclear region. It is found in the P-body. The protein localises to the stress granule. It localises to the cell projection. Its subcellular location is the lamellipodium. The protein resides in the dendrite. It is found in the dendritic spine. The protein localises to the growth cone. It localises to the filopodium. Its subcellular location is the axon. Its function is as follows. RNA-binding factor that recruits target transcripts to cytoplasmic protein-RNA complexes (mRNPs). This transcript 'caging' into mRNPs allows mRNA transport and transient storage. It also modulates the rate and location at which target transcripts encounter the translational apparatus and shields them from endonuclease attacks or microRNA-mediated degradation. Preferentially binds to N6-methyladenosine (m6A)-containing mRNAs and increases their stability. Regulates localized beta-actin/ACTB mRNA translation, a crucial process for cell polarity, cell migration and neurite outgrowth. Co-transcriptionally associates with the ACTB mRNA in the nucleus. This binding involves a conserved 54-nucleotide element in the ACTB mRNA 3'-UTR, known as the 'zipcode'. The RNP thus formed is exported to the cytoplasm, binds to a motor protein and is transported along the cytoskeleton to the cell periphery. During transport, prevents ACTB mRNA from being translated into protein. When the RNP complex reaches its destination near the plasma membrane, IGF2BP1 is phosphorylated. This releases the mRNA, allowing ribosomal 40S and 60S subunits to assemble and initiate ACTB protein synthesis. Monomeric ACTB then assembles into the subcortical actin cytoskeleton. During neuronal development, key regulator of neurite outgrowth, growth cone guidance and neuronal cell migration, presumably through the spatiotemporal fine tuning of protein synthesis, such as that of ACTB. May regulate mRNA transport to activated synapses. Binds to the 3'-UTR of CD44 mRNA and stabilizes it, hence promotes cell adhesion and invadopodia formation in cancer cells. Binds to the oncofetal H19 transcript and regulates its localization. Binds to and stabilizes BTRC/FBW1A mRNA. Binds to the adenine-rich autoregulatory sequence (ARS) located in PABPC1 mRNA and represses its translation. PABPC1 mRNA-binding is stimulated by PABPC1 protein. Prevents BTRC/FBW1A mRNA degradation by disrupting microRNA-dependent interaction with AGO2. During cellular stress, such as oxidative stress or heat shock, stabilizes target mRNAs that are recruited to stress granules, including CD44, IGF2, MAPK4, MYC, PTEN, RAPGEF2 and RPS6KA5 transcripts. Interacts with GAP43 transcript and transports it to axons. Binds to the 3'-UTR of IGF2 mRNA by a mechanism of cooperative and sequential dimerization and regulates IGF2 mRNA subcellular localization and translation. Binds to MYC mRNA, in the coding region instability determinant (CRD) of the open reading frame (ORF), hence prevents MYC cleavage by endonucleases and possibly microRNA targeting to MYC-CRD. Binding to MYC mRNA is enhanced by m6A-modification of the CRD. Binds to and stabilizes ABCB1/MDR-1 mRNA. Binds to the neuron-specific TAU mRNA and regulates its localization. Plays a direct role in the transport and translation of transcripts required for axonal regeneration in adult sensory neurons. During interstinal wound repair, interacts with and stabilizes PTGS2 transcript. PTGS2 mRNA stabilization may be crucial for colonic mucosal wound healing. In Mus musculus (Mouse), this protein is Insulin-like growth factor 2 mRNA-binding protein 1 (Igf2bp1).